The sequence spans 93 residues: MPRSLKKGPFVDEHLAKKVTAQNEAGTHNVIKTWSRRSMVTPDMIGHTIGVHDGRKHVPVFVTESMVGHKLGEFAPTRTFKGHVKDDKKARRR.

Belongs to the universal ribosomal protein uS19 family.

Its function is as follows. Protein S19 forms a complex with S13 that binds strongly to the 16S ribosomal RNA. The chain is Small ribosomal subunit protein uS19 from Cutibacterium acnes (strain DSM 16379 / KPA171202) (Propionibacterium acnes).